Reading from the N-terminus, the 632-residue chain is 1-deoxy-D-xylulose-5-phosphate synthase (632 aa).

Thiamine diphosphate-binding positions include His79 and 120-122 (GHA). A Mg(2+)-binding site is contributed by Asp152. Residues 153–154 (GA), Asn181, Phe293, and Glu377 contribute to the thiamine diphosphate site. Residue Asn181 participates in Mg(2+) binding.

Belongs to the transketolase family. DXPS subfamily. Homodimer. Requires Mg(2+) as cofactor. Thiamine diphosphate is required as a cofactor.

The enzyme catalyses D-glyceraldehyde 3-phosphate + pyruvate + H(+) = 1-deoxy-D-xylulose 5-phosphate + CO2. It functions in the pathway metabolic intermediate biosynthesis; 1-deoxy-D-xylulose 5-phosphate biosynthesis; 1-deoxy-D-xylulose 5-phosphate from D-glyceraldehyde 3-phosphate and pyruvate: step 1/1. In terms of biological role, catalyzes the acyloin condensation reaction between C atoms 2 and 3 of pyruvate and glyceraldehyde 3-phosphate to yield 1-deoxy-D-xylulose-5-phosphate (DXP). The sequence is that of 1-deoxy-D-xylulose-5-phosphate synthase from Parabacteroides distasonis (strain ATCC 8503 / DSM 20701 / CIP 104284 / JCM 5825 / NCTC 11152).